Here is a 216-residue protein sequence, read N- to C-terminus: Ribose-5-phosphate isomerase A (216 aa).

Residues 26-29 (TGST), 79-82 (DGAD), and 92-95 (KGGG) contribute to the substrate site. The active-site Proton acceptor is the E101. Substrate is bound at residue K119.

Belongs to the ribose 5-phosphate isomerase family. As to quaternary structure, homodimer.

It carries out the reaction aldehydo-D-ribose 5-phosphate = D-ribulose 5-phosphate. The protein operates within carbohydrate degradation; pentose phosphate pathway; D-ribose 5-phosphate from D-ribulose 5-phosphate (non-oxidative stage): step 1/1. Its function is as follows. Catalyzes the reversible conversion of ribose-5-phosphate to ribulose 5-phosphate. The polypeptide is Ribose-5-phosphate isomerase A (Legionella pneumophila (strain Corby)).